The sequence spans 360 residues: Chorismate synthase (360 aa).

Arg-48 and Arg-54 together coordinate NADP(+). FMN is bound by residues 125–127 (RSS), 242–243 (NG), Gly-283, 298–302 (KPTSS), and Arg-324.

It belongs to the chorismate synthase family. In terms of assembly, homotetramer. Requires FMNH2 as cofactor.

It carries out the reaction 5-O-(1-carboxyvinyl)-3-phosphoshikimate = chorismate + phosphate. It functions in the pathway metabolic intermediate biosynthesis; chorismate biosynthesis; chorismate from D-erythrose 4-phosphate and phosphoenolpyruvate: step 7/7. In terms of biological role, catalyzes the anti-1,4-elimination of the C-3 phosphate and the C-6 proR hydrogen from 5-enolpyruvylshikimate-3-phosphate (EPSP) to yield chorismate, which is the branch point compound that serves as the starting substrate for the three terminal pathways of aromatic amino acid biosynthesis. This reaction introduces a second double bond into the aromatic ring system. In Gluconobacter oxydans (strain 621H) (Gluconobacter suboxydans), this protein is Chorismate synthase.